A 400-amino-acid polypeptide reads, in one-letter code: PHD finger protein 24 (400 aa).

Gly2 is lipidated: N-myristoyl glycine. Positions 28-38 (LRDRPSIRRTG) are enriched in basic and acidic residues. The segment at 28–99 (LRDRPSIRRT…PEEFDRTSRF (72 aa)) is disordered. Arg36 is modified (omega-N-methylarginine). Ser43 is subject to Phosphoserine. A Phosphothreonine modification is found at Thr47. A Phosphoserine modification is found at Ser51. Over residues 78–97 (AWERLRDGRGVEPEEFDRTS) the composition is skewed to basic and acidic residues. Residues 129-190 (NDEMCDVCEV…TGWSCHYCDN (62 aa)) form a PHD-type zinc finger.

The protein is PHD finger protein 24 of Homo sapiens (Human).